The following is a 1327-amino-acid chain: Myb-like protein O (1327 aa).

Low complexity predominate over residues 131–142 (NNNINTTNNNNK). 4 disordered regions span residues 131-153 (NNNINTTNNNNKTNERQNNEESN), 263-390 (EEED…DESS), 504-668 (PPQQ…NHES), and 717-770 (KKKK…DNDD). A compositionally biased stretch (acidic residues) spans 263–283 (EEEDDEDYIPPEEEEDDDEDN). Residues 322–353 (YNNTANNINNNNIGDESDNNNNNNNNINNNSN) show a composition bias toward low complexity. A compositionally biased stretch (acidic residues) spans 356 to 374 (DDDDDDDDDNNDDDDDDND). Residues 511–532 (SSSSINSSNTMSSSSSSSSLSK) are compositionally biased toward low complexity. The span at 533-542 (NKLKKKKKEE) shows a compositional bias: basic residues. The span at 543 to 554 (KRKEEKRKEEKR) shows a compositional bias: basic and acidic residues. Residues 555–577 (KEKKRKKRQSITISKFKKNKKKT) show a composition bias toward basic residues. Acidic residues predominate over residues 585–606 (SESDSSSDDSDDSDFYYSDIEE). The span at 607–619 (GGGGNGNGSGSGV) shows a compositional bias: gly residues. The span at 624 to 633 (SDNEEGDSSS) shows a compositional bias: acidic residues. Low complexity-rich tracts occupy residues 646-668 (HTNNSNNSIENNNNNNNNNNHES) and 722-732 (QSSSSSSSSTI). The segment covering 754–770 (NDDEDDNNNNNEDDNDD) has biased composition (acidic residues). One can recognise an HTH myb-type domain in the interval 897–953 (NVKLNQLKFTGGEDLLLLMGVKRFGTFNWRIIQKRYFPNKTDDQLFHRYKNLLSHSS). The segment at residues 925-949 (WRIIQKRYFPNKTDDQLFHRYKNLL) is a DNA-binding region (H-T-H motif). In terms of domain architecture, Myb-like 1 spans 959–1010 (KQYLNGAKFTKEEEEKLDGAIKIHGLKWDIISRDYLHWKEPAMLKKFYEKRE). 2 stretches are compositionally biased toward low complexity: residues 1061-1118 (NSTN…NENN) and 1144-1160 (PIIENNSSTSTTRETSP). Disordered stretches follow at residues 1061 to 1122 (NSTN…YEFG) and 1144 to 1168 (PIIENNSSTSTTRETSPVQMNPCPI). The region spanning 1268–1316 (KWTREEDRIILITVKEKGTVDNEIWKSLSDTKIQDKTPDQIMYRYLQLL) is the Myb-like 2 domain.

The protein localises to the nucleus. The sequence is that of Myb-like protein O (mybO) from Dictyostelium discoideum (Social amoeba).